Consider the following 236-residue polypeptide: Purine nucleoside phosphorylase DeoD-type (236 aa).

His5 contacts a purine D-ribonucleoside. Residues Gly21, Arg25, Arg44, and 88–91 (RVGT) contribute to the phosphate site. Residues 180–182 (EME) and 204–205 (SD) contribute to the a purine D-ribonucleoside site. Asp205 functions as the Proton donor in the catalytic mechanism.

The protein belongs to the PNP/UDP phosphorylase family. As to quaternary structure, homohexamer; trimer of homodimers.

The catalysed reaction is a purine D-ribonucleoside + phosphate = a purine nucleobase + alpha-D-ribose 1-phosphate. It carries out the reaction a purine 2'-deoxy-D-ribonucleoside + phosphate = a purine nucleobase + 2-deoxy-alpha-D-ribose 1-phosphate. Catalyzes the reversible phosphorolytic breakdown of the N-glycosidic bond in the beta-(deoxy)ribonucleoside molecules, with the formation of the corresponding free purine bases and pentose-1-phosphate. In Shewanella frigidimarina (strain NCIMB 400), this protein is Purine nucleoside phosphorylase DeoD-type.